The sequence spans 889 residues: Coatomer subunit beta' (889 aa).

WD repeat units follow at residues 11–41 (NRSD…ELWN), 53–83 (VTET…RVFN), 95–125 (AHPD…KLWN), 138–169 (GHEH…KVWS), 182–214 (GQER…KIWD), and 226–256 (GHMS…KIWN). S326 is subject to Phosphoserine. Residues 806–889 (CGAEGLPGSS…AVPEPVEEES (84 aa)) form a disordered region. Positions 836 to 864 (DENKEAEVEDSEFKESNSEAVEAEKKEEE) are enriched in basic and acidic residues. Residues 866–879 (PQQQQSEQQPEQGE) are compositionally biased toward low complexity.

The protein belongs to the WD repeat COPB2 family. As to quaternary structure, oligomeric complex that consists of at least the alpha, beta, beta', gamma, delta, epsilon and zeta subunits. Interacts with the ESCRT-0 subunit VPS27.

The protein localises to the cytoplasm. It localises to the golgi apparatus membrane. Its subcellular location is the cytoplasmic vesicle. The protein resides in the COPI-coated vesicle membrane. Its function is as follows. The coatomer is a cytosolic protein complex that binds to dilysine motifs and reversibly associates with Golgi non-clathrin-coated vesicles, which further mediate biosynthetic protein transport from the ER, via the Golgi up to the trans Golgi network. Coatomer complex is required for budding from Golgi membranes, and is essential for the retrograde Golgi-to-ER transport of dilysine-tagged proteins. In Saccharomyces cerevisiae (strain ATCC 204508 / S288c) (Baker's yeast), this protein is Coatomer subunit beta' (SEC27).